Consider the following 159-residue polypeptide: Transcriptional repressor NrdR (159 aa).

A zinc finger lies at 3 to 34 (CPYCQSEDTQVKDSRPAEDGAAIRRRRVCPDC). The region spanning 49–139 (LVVVKKSGRK…VYRNFREAKD (91 aa)) is the ATP-cone domain.

It belongs to the NrdR family. Requires Zn(2+) as cofactor.

Its function is as follows. Negatively regulates transcription of bacterial ribonucleotide reductase nrd genes and operons by binding to NrdR-boxes. This Mesorhizobium japonicum (strain LMG 29417 / CECT 9101 / MAFF 303099) (Mesorhizobium loti (strain MAFF 303099)) protein is Transcriptional repressor NrdR.